A 574-amino-acid chain; its full sequence is Developmental and secondary metabolism regulator veA (574 aa).

4 disordered regions span residues 1–22 (MATR…SRIT), 39–60 (ERAR…VDPP), 255–500 (RSSD…GAGK), and 513–540 (RSYE…YPRR). The Velvet domain occupies 25 to 230 (GKKLTYKLNV…AEQGCRVRIR (206 aa)). Residues 39 to 44 (ERARAC) carry the Nuclear localization signal motif. 2 stretches are compositionally biased toward pro residues: residues 314-323 (RPLPPAPGPA) and 330-341 (PAPPAPPAPPSH). Composition is skewed to polar residues over residues 343–353 (PGYQSHLSFGS), 385–394 (HARNPSTSAE), 406–415 (RMSTERSSYP), and 448–458 (VAQSAAPRSQT). The segment at 457–498 (QTPSSSLVPSLPPLKALSGDYPNNLSQSSSSTSQSPSHDLGA) is PEST. Composition is skewed to low complexity over residues 459–474 (PSSS…KALS) and 482–493 (SQSSSSTSQSPS). Basic and acidic residues predominate over residues 513-525 (RSYEDSFGHDDRP).

It belongs to the velvet family. VeA subfamily. As to quaternary structure, component of the heterotrimeric velvet complex composed of laeA, veA and velB; VeA acting as a bridging protein between laeA and velB.

It localises to the nucleus. It is found in the cytoplasm. In terms of biological role, component of the velvet transcription factor complex that controls sexual/asexual developmental ratio in response to light, promoting sexual development in the darkness while stimulating asexual sporulation under illumination. The velvet complex hat acts as a global regulator for secondary metabolite gene expression. Controls the expression of the cyclopiazonic acid, aflatrem, and aflatoxin gene clusters. Controls the expression of the sclerotium-specific pigment asparasone A gene cluster. Controls the expression of the aflavarin gene cluster. also controls the production of hydrolases and other extracellular proteins during growth on natural starch-based substrates. Regulates genes involved in the High Osmolarity Glycerol (HOG) signaling pathway. Required for the conidial and sclerotial density-dependent production. This is Developmental and secondary metabolism regulator veA from Aspergillus flavus (strain ATCC 200026 / FGSC A1120 / IAM 13836 / NRRL 3357 / JCM 12722 / SRRC 167).